A 73-amino-acid polypeptide reads, in one-letter code: MKKDIHPDYHFIDVKMTDGTVVKMRSTWGNEGDQLALDIDPSAHPAWTGGSSRLMDTGGRVSKFKKKYEGLGF.

The protein belongs to the bacterial ribosomal protein bL31 family. Type A subfamily. As to quaternary structure, part of the 50S ribosomal subunit.

Functionally, binds the 23S rRNA. This chain is Large ribosomal subunit protein bL31, found in Ruegeria sp. (strain TM1040) (Silicibacter sp.).